Consider the following 78-residue polypeptide: MAREITDIKQFLELTRRADVKTATVKINKKLNKAGKPFRQTKFKVRGSSSLYTLVINDAGKAKKLIQSLPPTLKVNRL.

Belongs to the eukaryotic ribosomal protein eL38 family. As to quaternary structure, component of the large ribosomal subunit (LSU). Mature yeast ribosomes consist of a small (40S) and a large (60S) subunit. The 40S small subunit contains 1 molecule of ribosomal RNA (18S rRNA) and 33 different proteins (encoded by 57 genes). The large 60S subunit contains 3 rRNA molecules (25S, 5.8S and 5S rRNA) and 46 different proteins (encoded by 81 genes).

The protein resides in the cytoplasm. Its function is as follows. Component of the ribosome, a large ribonucleoprotein complex responsible for the synthesis of proteins in the cell. The small ribosomal subunit (SSU) binds messenger RNAs (mRNAs) and translates the encoded message by selecting cognate aminoacyl-transfer RNA (tRNA) molecules. The large subunit (LSU) contains the ribosomal catalytic site termed the peptidyl transferase center (PTC), which catalyzes the formation of peptide bonds, thereby polymerizing the amino acids delivered by tRNAs into a polypeptide chain. The nascent polypeptides leave the ribosome through a tunnel in the LSU and interact with protein factors that function in enzymatic processing, targeting, and the membrane insertion of nascent chains at the exit of the ribosomal tunnel. The protein is Large ribosomal subunit protein eL38 of Saccharomyces cerevisiae (strain ATCC 204508 / S288c) (Baker's yeast).